The following is a 688-amino-acid chain: PTS system glucoside-specific EIICBA component (688 aa).

The region spanning 3 to 427 (KKLFGQLQRI…FKLKTPGRED (425 aa)) is the PTS EIIC type-1 domain. The next 10 helical transmembrane spans lie at 12–32 (IGKA…LLAF), 81–101 (LGLA…YLIM), 137–157 (LVLG…MGAL), 182–202 (FVPI…SFAW), 223–243 (LTTF…LHHI), 284–304 (AFTT…AFAI), 315–335 (VVGG…ITEP), 340–360 (FLFV…TSFL), 364–384 (LLGV…ILYG), and 395–415 (LVIP…DFAI). The PTS EIIB type-1 domain occupies 438–519 (AKLPFDVLDA…AKIMSGEITK (82 aa)). C460 functions as the Phosphocysteine intermediate; for EIIB activity in the catalytic mechanism. One can recognise a PTS EIIA type-1 domain in the interval 560 to 664 (DQVFAGKMMG…SIVTPMIITN (105 aa)). Catalysis depends on H612, which acts as the Tele-phosphohistidine intermediate; for EIIA activity.

The protein resides in the cell membrane. The phosphoenolpyruvate-dependent sugar phosphotransferase system (sugar PTS), a major carbohydrate active -transport system, catalyzes the phosphorylation of incoming sugar substrates concomitantly with their translocation across the cell membrane. This system is involved in alpha- and beta-glucoside transport. In Staphylococcus aureus (strain USA300), this protein is PTS system glucoside-specific EIICBA component (glcB).